A 364-amino-acid chain; its full sequence is 2-oxoadipate dioxygenase/decarboxylase, chloroplastic/amyloplastic (364 aa).

The transit peptide at 1–49 (MAVALAGARSPGAGAILSLRRLAPAAAAPVRLGGSGTPGTRRRRGIAMA) directs the protein to the chloroplast. His-107 and Arg-111 together coordinate 2-oxoadipate. Position 107 (His-107) interacts with Fe(2+). His-243 is a binding site for Fe(2+). 2-oxoadipate is bound by residues Gln-289 and Tyr-313. Position 315 (Glu-315) interacts with Fe(2+).

This sequence belongs to the 2-oxoadipate dioxygenase/decarboxylase family. Requires Fe(2+) as cofactor. As to expression, expressed in roots, stems, leaf sheaths, leaf blades, panicles, and endosperm.

It is found in the plastid. The protein localises to the chloroplast. Its subcellular location is the amyloplast. The enzyme catalyses 2-oxoadipate + O2 = (R)-2-hydroxyglutarate + CO2. The protein operates within amino-acid degradation. Catalyzes the decarboxylation and hydroxylation of 2-oxoadipate (2OA) to form D-2-hydroxyglutarate (D-2-HGA). Is involved in a D-lysine catabolic pathway. Involved in the regulation of starch synthesis and amyloplast development within the peripheral endosperm during the grain-filling stage. The chain is 2-oxoadipate dioxygenase/decarboxylase, chloroplastic/amyloplastic from Oryza sativa subsp. japonica (Rice).